The chain runs to 192 residues: Transmembrane protein 276 (192 aa).

The first 32 residues, 1–32 (MAPKPGAEWSTALSHLVLGVVSLHAAVSTAEA), serve as a signal peptide directing secretion. Transmembrane regions (helical) follow at residues 35–55 (GAAA…APGL), 63–83 (AGAW…FHWV), 89–109 (SANL…HLGP), and 114–134 (VAGQ…AVFT).

It is found in the membrane. This chain is Transmembrane protein 276, found in Homo sapiens (Human).